A 439-amino-acid polypeptide reads, in one-letter code: Orphan methyltransferase M.SPRI (439 aa).

Residues 4–436 (LRVMSLFSGI…KELIHTYINK (433 aa)) enclose the SAM-dependent MTase C5-type domain. The active site involves cysteine 78.

This sequence belongs to the class I-like SAM-binding methyltransferase superfamily. C5-methyltransferase family. As to quaternary structure, monomer.

The catalysed reaction is a 2'-deoxycytidine in DNA + S-adenosyl-L-methionine = a 5-methyl-2'-deoxycytidine in DNA + S-adenosyl-L-homocysteine + H(+). In terms of biological role, a methyltransferase that methylates the C-1 in the sequence 5'-GGCC-3' and both cytosines in the sequence 5'-CCGG-3'. A methyltransferase that methylates C-3 within the sequence 5'-GGCC-3', C-1 in 5'-CCGG-3' and C-2 in 5'-CCWGG-3'. Modification confers resistance against restriction enzymes that recognize these sequences. This Bacillus phage SPR (Bacteriophage SPR) protein is Orphan methyltransferase M.SPRI.